A 323-amino-acid polypeptide reads, in one-letter code: MKTTFLDFEQPIAELEAKIEELRFVQDDSAVDISEEIERLSKKSQQLTKDLYANLSPWQVSQIARHPQRPYTLDYVAELFTDFHELHGDRAYADDVSIVGGLARFGGHPCMVIGHQKGRDTKERAARNFGMPRPEGYRKAERLMRLAEKFGLPIFTFVDTPGAYPGIGAEERGQSEAIGRNLYVMAELKTPIITTVIGEGGSGGALAIAVGDTVMMLQFSTYSVISPEGCASILWKSAAKAPEAAEALGLTAHRLKALGLIDKIINEPLGGAHRDPKGMAALLRRALADSLRQFQGMSIDALRERRFERLMAYGKFKETTPGA.

The CoA carboxyltransferase C-terminal domain occupies Arg-39 to Gln-293.

It belongs to the AccA family. Acetyl-CoA carboxylase is a heterohexamer composed of biotin carboxyl carrier protein (AccB), biotin carboxylase (AccC) and two subunits each of ACCase subunit alpha (AccA) and ACCase subunit beta (AccD).

The protein localises to the cytoplasm. It carries out the reaction N(6)-carboxybiotinyl-L-lysyl-[protein] + acetyl-CoA = N(6)-biotinyl-L-lysyl-[protein] + malonyl-CoA. The protein operates within lipid metabolism; malonyl-CoA biosynthesis; malonyl-CoA from acetyl-CoA: step 1/1. Component of the acetyl coenzyme A carboxylase (ACC) complex. First, biotin carboxylase catalyzes the carboxylation of biotin on its carrier protein (BCCP) and then the CO(2) group is transferred by the carboxyltransferase to acetyl-CoA to form malonyl-CoA. In Burkholderia vietnamiensis (strain G4 / LMG 22486) (Burkholderia cepacia (strain R1808)), this protein is Acetyl-coenzyme A carboxylase carboxyl transferase subunit alpha.